The chain runs to 108 residues: Thaicobrin (108 aa).

Residues 1-108 (SPPGNWQKAD…IWQKGLWWLG (108 aa)) enclose the B30.2/SPRY domain.

The protein belongs to the ohanin/vespryn family. Expressed by the venom gland.

It is found in the secreted. In terms of biological role, neurotoxin that produces dose-dependent hypolocomotion and hyperalgesia in mice. May directly act on the central nervous system, as it is 6500-fold more potent when administered intracerebroventricularly than intraperitoneal. The chain is Thaicobrin from Naja kaouthia (Monocled cobra).